Reading from the N-terminus, the 128-residue chain is Dehydrin Xero 1 (128 aa).

The span at 1–19 (MESYQNQSGAQQTHQQLDQ) shows a compositional bias: polar residues. Residues 1 to 128 (MESYQNQSGA…IKEKLPGGHH (128 aa)) are disordered. Composition is skewed to low complexity over residues 23–41 (PFPA…PAVA) and 48–60 (GMLH…SSSS). Over residues 75–91 (GITEKIKEKLPGHHDSN) the composition is skewed to basic and acidic residues. The segment covering 92–104 (KTSSLGSTTTAYD) has biased composition (polar residues). The segment covering 107–128 (TVHHEKKGMMEKIKEKLPGGHH) has biased composition (basic and acidic residues).

Belongs to the plant dehydrin family.

The sequence is that of Dehydrin Xero 1 (XERO1) from Arabidopsis thaliana (Mouse-ear cress).